A 66-amino-acid chain; its full sequence is Large ribosomal subunit protein bL35 (66 aa).

The protein belongs to the bacterial ribosomal protein bL35 family.

This chain is Large ribosomal subunit protein bL35, found in Azorhizobium caulinodans (strain ATCC 43989 / DSM 5975 / JCM 20966 / LMG 6465 / NBRC 14845 / NCIMB 13405 / ORS 571).